The primary structure comprises 63 residues: Large ribosomal subunit protein uL29 (63 aa).

Belongs to the universal ribosomal protein uL29 family.

This chain is Large ribosomal subunit protein uL29, found in Shewanella halifaxensis (strain HAW-EB4).